Consider the following 350-residue polypeptide: Protein-glutamate methylesterase/protein-glutamine glutaminase 1 (350 aa).

A Response regulatory domain is found at 3–121; it reads KVLIVEDSPV…RDYDIRARDL (119 aa). Aspartate 54 is modified (4-aspartylphosphate). Residues 148–342 form the CheB-type methylesterase domain; sequence PASGEPDIGK…PPEKIARVLV (195 aa). Residues serine 170, histidine 197, and aspartate 290 contribute to the active site.

It belongs to the CheB family. Phosphorylated by CheA. Phosphorylation of the N-terminal regulatory domain activates the methylesterase activity.

Its subcellular location is the cytoplasm. It carries out the reaction [protein]-L-glutamate 5-O-methyl ester + H2O = L-glutamyl-[protein] + methanol + H(+). The enzyme catalyses L-glutaminyl-[protein] + H2O = L-glutamyl-[protein] + NH4(+). Its function is as follows. Involved in chemotaxis. Part of a chemotaxis signal transduction system that modulates chemotaxis in response to various stimuli. Catalyzes the demethylation of specific methylglutamate residues introduced into the chemoreceptors (methyl-accepting chemotaxis proteins or MCP) by CheR. Also mediates the irreversible deamidation of specific glutamine residues to glutamic acid. The protein is Protein-glutamate methylesterase/protein-glutamine glutaminase 1 of Syntrophus aciditrophicus (strain SB).